A 348-amino-acid chain; its full sequence is Dihydroorotase (348 aa).

Positions 17 and 19 each coordinate Zn(2+). Residues 19-21 (HLR) and N45 each bind substrate. Zn(2+) contacts are provided by K103, H140, and H178. An N6-carboxylysine modification is found at K103. H140 contributes to the substrate binding site. L223 serves as a coordination point for substrate. A Zn(2+)-binding site is contributed by D251. The active site involves D251. Residues H255 and A267 each coordinate substrate.

The protein belongs to the metallo-dependent hydrolases superfamily. DHOase family. Class II DHOase subfamily. In terms of assembly, homodimer. Requires Zn(2+) as cofactor.

It carries out the reaction (S)-dihydroorotate + H2O = N-carbamoyl-L-aspartate + H(+). The protein operates within pyrimidine metabolism; UMP biosynthesis via de novo pathway; (S)-dihydroorotate from bicarbonate: step 3/3. Its function is as follows. Catalyzes the reversible cyclization of carbamoyl aspartate to dihydroorotate. In Salmonella paratyphi B (strain ATCC BAA-1250 / SPB7), this protein is Dihydroorotase.